The chain runs to 20 residues: Venom peptide Ocy8 (20 aa).

In terms of tissue distribution, expressed by the venom gland.

It is found in the secreted. The sequence is that of Venom peptide Ocy8 from Opisthacanthus cayaporum (South American scorpion).